The chain runs to 503 residues: ATP synthase subunit alpha (503 aa).

170 to 177 serves as a coordination point for ATP; it reads GDRQTGKT.

This sequence belongs to the ATPase alpha/beta chains family. F-type ATPases have 2 components, CF(1) - the catalytic core - and CF(0) - the membrane proton channel. CF(1) has five subunits: alpha(3), beta(3), gamma(1), delta(1), epsilon(1). CF(0) has three main subunits: a(1), b(2) and c(9-12). The alpha and beta chains form an alternating ring which encloses part of the gamma chain. CF(1) is attached to CF(0) by a central stalk formed by the gamma and epsilon chains, while a peripheral stalk is formed by the delta and b chains.

The protein resides in the cell inner membrane. The enzyme catalyses ATP + H2O + 4 H(+)(in) = ADP + phosphate + 5 H(+)(out). Functionally, produces ATP from ADP in the presence of a proton gradient across the membrane. The alpha chain is a regulatory subunit. This Thermotoga neapolitana (strain ATCC 49049 / DSM 4359 / NBRC 107923 / NS-E) protein is ATP synthase subunit alpha.